We begin with the raw amino-acid sequence, 78 residues long: Exodeoxyribonuclease 7 small subunit (78 aa).

Belongs to the XseB family. Heterooligomer composed of large and small subunits.

Its subcellular location is the cytoplasm. It catalyses the reaction Exonucleolytic cleavage in either 5'- to 3'- or 3'- to 5'-direction to yield nucleoside 5'-phosphates.. Its function is as follows. Bidirectionally degrades single-stranded DNA into large acid-insoluble oligonucleotides, which are then degraded further into small acid-soluble oligonucleotides. This Mycobacterium leprae (strain TN) protein is Exodeoxyribonuclease 7 small subunit.